Reading from the N-terminus, the 1317-residue chain is Immunoglobulin superfamily member 1 (1317 aa).

The signal sequence occupies residues 1–20 (MMLRTFTLLLLCIWLNPGMT). Ig-like C2-type domains lie at 21 to 112 (SLAV…KILE), 114 to 211 (EAPG…KLVV), 216 to 302 (PKPT…SDIL), 311 to 398 (PKTW…ATYN), and 400 to 481 (VELM…HRSK). The Extracellular segment spans residues 21–499 (SLAVESQPEL…GFLTWNSILN (479 aa)). N43 is a glycosylation site (N-linked (GlcNAc...) asparagine). A disulfide bond links C48 and C96. C238 and C286 are disulfide-bonded. N-linked (GlcNAc...) asparagine glycans are attached at residues N328 and N371. 2 disulfide bridges follow: C333-C382 and C422-C465. A helical membrane pass occupies residues 500–520 (EAVRVSLTMQLASLLLLVVWI). Residues 521-531 (RWKCRRLRLRE) lie on the Cytoplasmic side of the membrane. Residues 532–552 (AWLLGTAQGVAMLFILMALLC) traverse the membrane as a helical segment. Topologically, residues 553–1317 (CGLCNGALTE…EVSVELTVPI (765 aa)) are extracellular. 7 consecutive Ig-like C2-type domains span residues 570–658 (TPKP…ALEL), 659–753 (VGTD…ELVI), 758–850 (PKPF…LVVT), 854–938 (PKPT…SSLS), 946–1041 (TDTF…ELIV), 1046–1131 (PKPS…NHSN), and 1142–1223 (PKPS…EPSD). Residues C780 and C830 are joined by a disulfide bond. Residue N871 is glycosylated (N-linked (GlcNAc...) asparagine). C876 and C923 are joined by a disulfide. N-linked (GlcNAc...) asparagine glycans are attached at residues N967 and N1063. Cystine bridges form between C1068–C1115 and C1164–C1207. A disordered region spans residues 1290 to 1310 (NQEGEPGTTTNSPSSASQEVS). Polar residues predominate over residues 1296–1309 (GTTTNSPSSASQEV).

In terms of assembly, interacts with INHA; the interaction is not confirmed by standard receptor binding assays. Interacts with ACVR1B; the interaction appears to be ligand-dependent as it is diminished by inhibin B and activin A. Interacts with ACVR2A, ACVR2B, ACVRL1 and BMPR1B. Interacts with HECTD1.

It localises to the membrane. It is found in the secreted. Its function is as follows. Seems to be a coreceptor in inhibin signaling, but seems not to be a high-affinity inhibin receptor. Antagonizes activin A signaling in the presence or absence of inhibin B. Necessary to mediate a specific antagonistic effect of inhibin B on activin-stimulated transcription. The polypeptide is Immunoglobulin superfamily member 1 (Igsf1) (Mus musculus (Mouse)).